Reading from the N-terminus, the 825-residue chain is Translation initiation factor IF-2 (825 aa).

Basic and acidic residues-rich tracts occupy residues 1–19, 35–45, 70–98, and 113–122; these read MTKK…DNKK, RKGEKKTEGKR, LLKD…EYKK, and KKVESVEKPA. A disordered region spans residues 1–239; the sequence is MTKKQENETS…TQRKDRPLPE (239 aa). A compositionally biased stretch (low complexity) spans 158–169; sequence PSSSRRPSSRPS. A compositionally biased stretch (basic residues) spans 181–191; the sequence is GRRRKSGKPGR. Polar residues predominate over residues 194 to 208; that stretch reads QNSYADQGRGANSNR. The segment covering 211–220 has biased composition (basic residues); it reads QRKRKNKKHQ. One can recognise a tr-type G domain in the interval 326-495; that stretch reads VRPPVVTIMG…ILEADMLELK (170 aa). Residues 335–342 form a G1 region; that stretch reads GHVDHGKT. Position 335-342 (335-342) interacts with GTP; the sequence is GHVDHGKT. Residues 360 to 364 form a G2 region; that stretch reads GITQN. Positions 381-384 are G3; that stretch reads DTPG. GTP is bound by residues 381–385 and 435–438; these read DTPGH and NKMD. The interval 435 to 438 is G4; that stretch reads NKMD. Residues 471-473 are G5; that stretch reads SAK.

Belongs to the TRAFAC class translation factor GTPase superfamily. Classic translation factor GTPase family. IF-2 subfamily.

It is found in the cytoplasm. In terms of biological role, one of the essential components for the initiation of protein synthesis. Protects formylmethionyl-tRNA from spontaneous hydrolysis and promotes its binding to the 30S ribosomal subunits. Also involved in the hydrolysis of GTP during the formation of the 70S ribosomal complex. In Lactobacillus delbrueckii subsp. bulgaricus (strain ATCC 11842 / DSM 20081 / BCRC 10696 / JCM 1002 / NBRC 13953 / NCIMB 11778 / NCTC 12712 / WDCM 00102 / Lb 14), this protein is Translation initiation factor IF-2.